Here is a 232-residue protein sequence, read N- to C-terminus: GTP cyclohydrolase III (232 aa).

The protein belongs to the archaeal-type GTP cyclohydrolase family.

It carries out the reaction GTP + 3 H2O = 2-amino-5-formylamino-6-(5-phospho-D-ribosylamino)pyrimidin-4(3H)-one + 2 phosphate + 2 H(+). Catalyzes the formation of 2-amino-5-formylamino-6-ribofuranosylamino-4(3H)-pyrimidinone ribonucleotide monophosphate and inorganic phosphate from GTP. Also has an independent pyrophosphate phosphohydrolase activity. In Saccharolobus islandicus (strain Y.N.15.51 / Yellowstone #2) (Sulfolobus islandicus), this protein is GTP cyclohydrolase III.